The chain runs to 543 residues: Chaperonin GroEL (543 aa).

ATP contacts are provided by residues 29–32 (TIGP), 86–90 (DGTTT), G413, 478–480 (NAA), and D494.

It belongs to the chaperonin (HSP60) family. In terms of assembly, forms a cylinder of 14 subunits composed of two heptameric rings stacked back-to-back. Interacts with the co-chaperonin GroES.

The protein localises to the cytoplasm. It carries out the reaction ATP + H2O + a folded polypeptide = ADP + phosphate + an unfolded polypeptide.. Together with its co-chaperonin GroES, plays an essential role in assisting protein folding. The GroEL-GroES system forms a nano-cage that allows encapsulation of the non-native substrate proteins and provides a physical environment optimized to promote and accelerate protein folding. This Limosilactobacillus fermentum (strain NBRC 3956 / LMG 18251) (Lactobacillus fermentum) protein is Chaperonin GroEL.